Reading from the N-terminus, the 540-residue chain is Signal peptide peptidase-like 2 (540 aa).

Residues 1 to 27 form the signal peptide; it reads MDSLRFLRILLLSSSILLLSLRSTVTA. The Lumenal segment spans residues 28–196; it reads GDIVHQDNLA…PRRPAVDVAE (169 aa). A glycan (N-linked (GlcNAc...) asparagine) is linked at N83. In terms of domain architecture, PA spans 95-173; it reads SCTPLKNKLS…QDAGASLQKM (79 aa). N176 carries N-linked (GlcNAc...) asparagine glycosylation. Residues 197–217 form a helical membrane-spanning segment; it reads VFLWLMAIGTILCASYWSAWS. At 218 to 248 the chain is on the cytoplasmic side; the sequence is AREAAIEHDKLLKDAIDEIPNTNDGGSGVVE. A helical membrane pass occupies residues 249-269; sequence INSISAIFFVVLASGFLVILY. The Lumenal segment spans residues 270–278; that stretch reads KLMSYWFVE. A helical transmembrane segment spans residues 279–299; it reads LLVVVFCIGGVEGLQTCLVAL. Topologically, residues 300–319 are cytoplasmic; the sequence is LSRWFQRAADTYVKVPFLGP. Residues 320 to 340 form a helical membrane-spanning segment; it reads ISYLTLAVSPFCIVFAVLWAV. At 341–345 the chain is on the lumenal side; sequence YRVHS. The helical transmembrane segment at 346–366 threads the bilayer; it reads FAWIGQDVLGIALIITVLQIV. Over 367–370 the chain is Cytoplasmic; the sequence is HVPN. A helical transmembrane segment spans residues 371-391; sequence LKVGTVLLSCAFLYDIFWVFV. Residue D385 is part of the active site. Residues 392 to 429 lie on the Lumenal side of the membrane; it reads SKKLFHESVMIVVARGDKSGEDGIPMLLKIPRMFDPWG. A helical membrane pass occupies residues 430–450; sequence GYSIIGFGDILLPGLLIAFAL. D438 is a catalytic residue. Over 451-462 the chain is Cytoplasmic; it reads RYDWLANKTLRT. Residues 463 to 483 form a helical membrane-spanning segment; sequence GYFIWAMVAYGLGLLITYVAL. The Lumenal portion of the chain corresponds to 484 to 488; that stretch reads NLMDG. A helical membrane pass occupies residues 489–509; it reads HGQPALLYIVPFTLGTMLTLA. The short motif at 492-494 is the PAL element; that stretch reads PAL. The Cytoplasmic segment spans residues 510 to 540; the sequence is RKRDDLWILWTKGEPERACPHHVRLEQCSEK.

It belongs to the peptidase A22B family. Post-translationally, glycosylated. Ubiquitous.

The protein localises to the endosome membrane. Functionally, intramembrane-cleaving aspartic protease (I-CLiP) that cleaves type II membrane signal peptides in the hydrophobic plane of the membrane. In Arabidopsis thaliana (Mouse-ear cress), this protein is Signal peptide peptidase-like 2 (SPPL2).